We begin with the raw amino-acid sequence, 317 residues long: NADH-quinone oxidoreductase subunit H 1 (317 aa).

Helical transmembrane passes span I7–W27, A74–V94, I107–G127, L147–F167, L179–E199, F230–F250, V257–L277, and V297–A317.

Belongs to the complex I subunit 1 family. NDH-1 is composed of 14 different subunits. Subunits NuoA, H, J, K, L, M, N constitute the membrane sector of the complex.

It localises to the cell inner membrane. The enzyme catalyses a quinone + NADH + 5 H(+)(in) = a quinol + NAD(+) + 4 H(+)(out). NDH-1 shuttles electrons from NADH, via FMN and iron-sulfur (Fe-S) centers, to quinones in the respiratory chain. The immediate electron acceptor for the enzyme in this species is believed to be ubiquinone. Couples the redox reaction to proton translocation (for every two electrons transferred, four hydrogen ions are translocated across the cytoplasmic membrane), and thus conserves the redox energy in a proton gradient. This subunit may bind ubiquinone. The polypeptide is NADH-quinone oxidoreductase subunit H 1 (Nitrosospira multiformis (strain ATCC 25196 / NCIMB 11849 / C 71)).